Consider the following 154-residue polypeptide: Ecotin-like protein 2 (154 aa).

Belongs to the protease inhibitor I11 (ecotin) family.

This chain is Ecotin-like protein 2, found in Trypanosoma brucei brucei (strain 927/4 GUTat10.1).